A 287-amino-acid polypeptide reads, in one-letter code: MDLILLLGIAVALLVILVTLFFFTKGKGSQESGKYNHPRVENEAQAAPRRAQVVRNQRNRARVAAAPAEEQHHAAADGGSDEDEIPHADFNGEKMGAKKRAKLEAKAEKKALREQELKIREDQKKKDALLEEQRKVEAEKEAEEERKREEAEKKAREEKARQEHEEYLRMKEAFSVEEEGFDQEQEDDKQNMLQEFINFVKSNKVVVLEDLAVQFKLKTQAAIDRIVELQKDGRLSGVIDDRGKFIYISEEELNAVAKFIKQRGRVSITELAENSNNLINLVPVSAE.

The Lumenal segment spans residues Met-1–Leu-5. The chain crosses the membrane as a helical span at residues Leu-6–Gly-26. At Lys-27 to Glu-287 the chain is on the cytoplasmic side. Disordered regions lie at residues Gly-28–Lys-102 and Lys-135–His-164. Over residues Ala-44–Ala-68 the composition is skewed to low complexity. Residues Ile-85–Lys-102 are compositionally biased toward basic and acidic residues.

The protein belongs to the DDRGK1 family. In terms of assembly, interacts with Atg9; the interaction is transient.

The protein localises to the endoplasmic reticulum membrane. Its function is as follows. Substrate adapter for ufmylation, the covalent attachment of the ubiquitin-like modifier UFM1 to substrate proteins. Required for ufmylation of Atg9; protects the nervous system during aging, possibly by stabilizing Atg9 and supporting its function. This chain is DDRGK domain-containing protein 1, found in Culex quinquefasciatus (Southern house mosquito).